A 161-amino-acid chain; its full sequence is Phosphopantetheine adenylyltransferase (161 aa).

Position 11 (Ser11) interacts with substrate. ATP is bound by residues 11-12 (SF) and His19. Lys43, Leu75, and Arg89 together coordinate substrate. ATP is bound by residues 90–92 (GLR), Glu100, and 125–131 (YSFISSS).

It belongs to the bacterial CoaD family. As to quaternary structure, homohexamer. Mg(2+) serves as cofactor.

It is found in the cytoplasm. It carries out the reaction (R)-4'-phosphopantetheine + ATP + H(+) = 3'-dephospho-CoA + diphosphate. Its pathway is cofactor biosynthesis; coenzyme A biosynthesis; CoA from (R)-pantothenate: step 4/5. Functionally, reversibly transfers an adenylyl group from ATP to 4'-phosphopantetheine, yielding dephospho-CoA (dPCoA) and pyrophosphate. This Staphylococcus epidermidis (strain ATCC 35984 / DSM 28319 / BCRC 17069 / CCUG 31568 / BM 3577 / RP62A) protein is Phosphopantetheine adenylyltransferase.